Reading from the N-terminus, the 360-residue chain is Phospho-N-acetylmuramoyl-pentapeptide-transferase (360 aa).

Transmembrane regions (helical) follow at residues 21–41 (YLSF…LWMG), 73–93 (TMGG…WADL), 94–114 (TNPY…VGFV), 132–152 (WKYF…YAHG), 168–188 (VMPQ…VGTS), 199–219 (GLAI…AWAT), 239–259 (LVVV…FNTY), 263–283 (VFMG…IAVL), 288–308 (FVLV…ILQV), and 338–358 (VIVR…ATLK).

The protein belongs to the glycosyltransferase 4 family. MraY subfamily. Mg(2+) is required as a cofactor.

Its subcellular location is the cell inner membrane. The enzyme catalyses UDP-N-acetyl-alpha-D-muramoyl-L-alanyl-gamma-D-glutamyl-meso-2,6-diaminopimeloyl-D-alanyl-D-alanine + di-trans,octa-cis-undecaprenyl phosphate = di-trans,octa-cis-undecaprenyl diphospho-N-acetyl-alpha-D-muramoyl-L-alanyl-D-glutamyl-meso-2,6-diaminopimeloyl-D-alanyl-D-alanine + UMP. It functions in the pathway cell wall biogenesis; peptidoglycan biosynthesis. Its function is as follows. Catalyzes the initial step of the lipid cycle reactions in the biosynthesis of the cell wall peptidoglycan: transfers peptidoglycan precursor phospho-MurNAc-pentapeptide from UDP-MurNAc-pentapeptide onto the lipid carrier undecaprenyl phosphate, yielding undecaprenyl-pyrophosphoryl-MurNAc-pentapeptide, known as lipid I. The protein is Phospho-N-acetylmuramoyl-pentapeptide-transferase of Vibrio cholerae serotype O1 (strain ATCC 39541 / Classical Ogawa 395 / O395).